A 314-amino-acid chain; its full sequence is Cytochrome bo(3) ubiquinol oxidase subunit 2 (314 aa).

The signal sequence occupies residues 1–23; that stretch reads MSKKRYPRLFGILPFLGMLLLSG. Residue C24 is the site of N-palmitoyl cysteine attachment. C24 carries S-diacylglycerol cysteine lipidation. The Periplasmic portion of the chain corresponds to 24 to 42; sequence CNWTLLDPKGQVGIEQKNL. A helical membrane pass occupies residues 43-63; it reads ILIATGLMLLVVIPVIIMTVV. The Cytoplasmic portion of the chain corresponds to 64–86; sequence FAWKYRASNKAATYTPDWSHSTK. The helical transmembrane segment at 87 to 107 threads the bilayer; it reads IEAAVWIIPILIIIALGYFTY. Residues 108–314 are Periplasmic-facing; that stretch reads HSTHKLDPYR…SMQPAAGAEE (207 aa). Basic and acidic residues predominate over residues 278-293; it reads YEGMNRGRPSHEEAGS. The disordered stretch occupies residues 278–314; that stretch reads YEGMNRGRPSHEEAGSKDLATTKGVESSMQPAAGAEE.

This sequence belongs to the cytochrome c oxidase subunit 2 family. Heterooctamer of two A chains, two B chains, two C chains and two D chains.

It is found in the cell inner membrane. Its function is as follows. Cytochrome bo(3) ubiquinol terminal oxidase is the component of the aerobic respiratory chain of E.coli that predominates when cells are grown at high aeration. Has proton pump activity across the membrane in addition to electron transfer, pumping 2 protons/electron. The protein is Cytochrome bo(3) ubiquinol oxidase subunit 2 (cyoA) of Pseudomonas putida (Arthrobacter siderocapsulatus).